Here is a 383-residue protein sequence, read N- to C-terminus: Chaperone protein DnaJ (383 aa).

The 65-residue stretch at 6 to 70 (DYYDVLGVGR…QKRAAYDQYG (65 aa)) folds into the J domain. The CR-type zinc finger occupies 140 to 222 (GKETKISYSR…CHGTGREEER (83 aa)). Zn(2+)-binding residues include C153, C156, C170, C173, C196, C199, C210, and C213. 4 CXXCXGXG motif repeats span residues 153–160 (CHTCHGSG), 170–177 (CHKCHGAG), 196–203 (CDVCGGTG), and 210–217 (CDTCHGTG).

This sequence belongs to the DnaJ family. Homodimer. Zn(2+) serves as cofactor.

The protein resides in the cytoplasm. Functionally, participates actively in the response to hyperosmotic and heat shock by preventing the aggregation of stress-denatured proteins and by disaggregating proteins, also in an autonomous, DnaK-independent fashion. Unfolded proteins bind initially to DnaJ; upon interaction with the DnaJ-bound protein, DnaK hydrolyzes its bound ATP, resulting in the formation of a stable complex. GrpE releases ADP from DnaK; ATP binding to DnaK triggers the release of the substrate protein, thus completing the reaction cycle. Several rounds of ATP-dependent interactions between DnaJ, DnaK and GrpE are required for fully efficient folding. Also involved, together with DnaK and GrpE, in the DNA replication of plasmids through activation of initiation proteins. This is Chaperone protein DnaJ from Latilactobacillus sakei (Lactobacillus sakei).